Here is a 440-residue protein sequence, read N- to C-terminus: Thymidine phosphorylase (440 aa).

This sequence belongs to the thymidine/pyrimidine-nucleoside phosphorylase family. Homodimer.

The catalysed reaction is thymidine + phosphate = 2-deoxy-alpha-D-ribose 1-phosphate + thymine. The protein operates within pyrimidine metabolism; dTMP biosynthesis via salvage pathway; dTMP from thymine: step 1/2. The enzymes which catalyze the reversible phosphorolysis of pyrimidine nucleosides are involved in the degradation of these compounds and in their utilization as carbon and energy sources, or in the rescue of pyrimidine bases for nucleotide synthesis. The protein is Thymidine phosphorylase of Erwinia tasmaniensis (strain DSM 17950 / CFBP 7177 / CIP 109463 / NCPPB 4357 / Et1/99).